Here is a 72-residue protein sequence, read N- to C-terminus: SRY-related protein MG42 (72 aa).

The segment at residues 1–69 (VKRPMNAFMV…KHMADYPNYK (69 aa)) is a DNA-binding region (HMG box).

It is found in the nucleus. In Tarentola mauritanica (Common wall gecko), this protein is SRY-related protein MG42.